The primary structure comprises 92 residues: Larval cuticle protein 9 (92 aa).

The N-terminal stretch at 1–16 (MKFVIVLACLLAVVFA) is a signal peptide. One can recognise a Chitin-binding type R&amp;R domain in the interval 31–92 (LLDFNYAYEL…TGYHPKVVEA (62 aa)).

Its function is as follows. Component of the cuticle of the larva. This chain is Larval cuticle protein 9 (Lcp9), found in Drosophila melanogaster (Fruit fly).